The sequence spans 546 residues: Src substrate cortactin (546 aa).

The disordered stretch occupies residues 1–28 (MWKASAGHAVSITQDDGGADDWETDPDF). Residues 17–28 (GGADDWETDPDF) show a composition bias toward acidic residues. 6 Cortactin repeats span residues 80 to 116 (ASHG…SQVD), 117 to 153 (SVRG…SQKD), 154 to 190 (YSSG…SQKD), 191 to 227 (YSKG…SQKD), 228 to 264 (YVKG…SQKD), and 265 to 301 (YKTG…SQQD). 2 positions are modified to N6-acetyllysine: K87 and K107. Position 113 is a phosphoserine (S113). R119 bears the Omega-N-methylarginine mark. N6-acetyllysine is present on K124. K144 carries the post-translational modification N6-acetyllysine; alternate. K144 participates in a covalent cross-link: Glycyl lysine isopeptide (Lys-Gly) (interchain with G-Cter in SUMO1); alternate. K144 participates in a covalent cross-link: Glycyl lysine isopeptide (Lys-Gly) (interchain with G-Cter in SUMO2); alternate. At S150 the chain carries Phosphoserine. An N6-acetyllysine mark is found at K152, K161, and K171. Position 181 is an N6-acetyllysine; alternate (K181). Residue K181 forms a Glycyl lysine isopeptide (Lys-Gly) (interchain with G-Cter in SUMO1); alternate linkage. K181 is covalently cross-linked (Glycyl lysine isopeptide (Lys-Gly) (interchain with G-Cter in SUMO2); alternate). 2 positions are modified to N6-acetyllysine: K193 and K198. K218 participates in a covalent cross-link: Glycyl lysine isopeptide (Lys-Gly) (interchain with G-Cter in SUMO1). Position 235 is an N6-acetyllysine (K235). Residue S261 is modified to Phosphoserine. K272 carries the N6-acetyllysine modification. Position 295 is an N6-acetyllysine; alternate (K295). K295 is covalently cross-linked (Glycyl lysine isopeptide (Lys-Gly) (interchain with G-Cter in SUMO2); alternate). The stretch at 302–324 (YAKGFGGKYGVQKDRMDKNASTF) is one Cortactin 7; truncated repeat. N6-acetyllysine occurs at positions 304, 309, 314, and 346. Residues 348–401 (SNIRANFENLAKEREQEDRRKAEAERAQRMAKERQEQEEARRKLEEQARAKKQT) are a coiled coil. The disordered stretch occupies residues 355–424 (ENLAKEREQE…PPSSPIYEDA (70 aa)). The span at 357 to 396 (LAKEREQEDRRKAEAERAQRMAKERQEQEEARRKLEEQAR) shows a compositional bias: basic and acidic residues. T401 carries the phosphothreonine modification. A phosphoserine mark is found at S405, S407, S417, and S418. Phosphotyrosine is present on residues Y421 and Y442. S443 carries the post-translational modification Phosphoserine. At Y466 the chain carries Phosphotyrosine; by FAK1. Phosphotyrosine; by SRC is present on residues Y482 and Y485. One can recognise an SH3 domain in the interval 488–546 (DLGITAIALYDYQAAGDDEISFDPDDIITNIEMIDDGWWRGVCKGRYGLFPANYVELRQ).

In terms of assembly, part of a complex composed of NEDD9, AURKA and CTTN; within the complex NEDD9 acts as a scaffold protein and is required for complex formation. Interacts (via N-terminus) with NEDD9. Identified in a complex containing FGFR4, NCAM1, CDH2, PLCG1, FRS2, SRC, SHC1, GAP43 and CTTN. Forms a complex with ABL1 and MYLK. Interacts with SHANK2 and SHANK3 (via its SH3 domain). Interacts with PLXDC2 and SRCIN1. Interacts with SAMSN1 (via SH3 domain). Interacts (via SH3 domain) with ASAP1 (via Pro-rich region). Interacts (via SH3 domain) with DNM2. Interacts with ACTN1. Interacts with FER. Interacts with KCNA2 (via non-phosphorylated C-terminus). Interacts with FGD1. Interacts with ABL2. Interacts with CTTNBP2NL; this interaction may target CTTN to stress fibers. Interacts with CTTNBP2; this interaction may target CTTN at the cell cortex or dendritic spines. Interacts with KCNH1. Interacts (via SH3 domain) with DIP2A (via N-terminus); the interaction enhances CTTN acetylation and is required for proper synaptic transmission. Interacts with XIRP1 (via N-terminus); the interaction promotes CTTN localization to intercalated disks in cardiomyocytes. Post-translationally, acetylated. Phosphorylated by FER. Phosphorylated in response to FGR activation. Phosphorylation by SRC promotes MYLK binding. Phosphorylated on tyrosine residues in response to CHRM1 activation. Phosphorylated by PTK2/FAK1 in response to cell adhesion. Tyrosine phosphorylation in transformed cells may contribute to cellular growth regulation and transformation. Phosphorylated by PKN2 at both serine and threonine residues in a GTP-bound Rac1-dependent manner in hyaluronan-induced astrocytes and hence down-regulated CTTN ability to associate with filamentous actin. In terms of tissue distribution, expressed at intercalated disks in the heart (at protein level). Expressed in most tissues, except in B-lymphocytes or plasma cells.

Its subcellular location is the cytoplasm. The protein localises to the cytoskeleton. It localises to the cell projection. The protein resides in the lamellipodium. It is found in the ruffle. Its subcellular location is the dendrite. The protein localises to the cell membrane. It localises to the podosome. The protein resides in the cell junction. It is found in the focal adhesion. Its subcellular location is the membrane. The protein localises to the clathrin-coated pit. It localises to the dendritic spine. The protein resides in the cell cortex. It is found in the endoplasmic reticulum. Functionally, contributes to the organization of the actin cytoskeleton and cell shape. Plays a role in the formation of lamellipodia and in cell migration. Plays a role in the regulation of neuron morphology, axon growth and formation of neuronal growth cones. Through its interaction with CTTNBP2, involved in the regulation of neuronal spine density. Plays a role in focal adhesion assembly and turnover. In complex with ABL1 and MYLK regulates cortical actin-based cytoskeletal rearrangement critical to sphingosine 1-phosphate (S1P)-mediated endothelial cell (EC) barrier enhancement. Plays a role in intracellular protein transport and endocytosis, and in modulating the levels of potassium channels present at the cell membrane. Plays a role in receptor-mediated endocytosis via clathrin-coated pits. Required for stabilization of KCNH1 channels at the cell membrane. The chain is Src substrate cortactin (Cttn) from Mus musculus (Mouse).